We begin with the raw amino-acid sequence, 467 residues long: MAENNTDTKSSNQMWGGRFASGPDAIMEEINASIGFDKKLFAQDIRGSIAHATMLAHQGIISSDDKDKIVHGLNTILSEIESGNFEFSRQLEDIHMNVEARLATLIGPAAGRLHTARSRNDQVALDFRLWVKEELQKTEQMLTGLIAAFLDRAEEHAESVMPGFTHLQTAQPVTFGHHCMAYVEMFGRDRSRVRHAIEHLDESPIGAAALAGTGYPIDRHMTAKALGFREPTRNSIDTVSDRDFAIEFLAIAAIAGMHLSRLAEEIVIWSTPQFGFVRLSDAFSTGSSIMPQKKNPDAAELVRAKTGRINGSLIALLTIMKGLPLAYSKDMQEDKEQVFDAAESLELAIAAMTGMVRDMTVNTARMKAAAGSGFSTATDLADWLVREAGLPFRDAHHVTGRAVALAESKGCDLAELPLSDLQAIHSAITDKVYDVLTVEASVASRKSFGGTAPSEVRKQIAFWRARN.

The protein belongs to the lyase 1 family. Argininosuccinate lyase subfamily.

It localises to the cytoplasm. It carries out the reaction 2-(N(omega)-L-arginino)succinate = fumarate + L-arginine. Its pathway is amino-acid biosynthesis; L-arginine biosynthesis; L-arginine from L-ornithine and carbamoyl phosphate: step 3/3. This Rhizobium etli (strain ATCC 51251 / DSM 11541 / JCM 21823 / NBRC 15573 / CFN 42) protein is Argininosuccinate lyase.